Reading from the N-terminus, the 83-residue chain is Mu-theraphotoxin-Hhn2k (83 aa).

The first 21 residues, 1–21, serve as a signal peptide directing secretion; that stretch reads MKASMFLALAGLVLLFVVDYA. Residues 22–48 constitute a propeptide that is removed on maturation; sequence SESEEKEFPIELLSKIFAVDVFKGEER. 3 disulfide bridges follow: Cys50-Cys65, Cys57-Cys70, and Cys64-Cys77. The residue at position 81 (Leu81) is a Leucine amide.

This sequence belongs to the neurotoxin 10 (Hwtx-1) family. 15 (Hntx-3) subfamily. In terms of assembly, monomer. In terms of tissue distribution, expressed by the venom gland.

It is found in the secreted. Lethal neurotoxin. Selectively blocks tetrodotoxin-sensitive voltage-gated sodium channels (Nav). Does not affect tetrodotoxin-resistant voltage-gated sodium channels or calcium channels. The protein is Mu-theraphotoxin-Hhn2k of Cyriopagopus hainanus (Chinese bird spider).